A 182-amino-acid chain; its full sequence is Flavodoxin (182 aa).

In terms of domain architecture, Flavodoxin-like spans 4 to 173 (IGLFFGSDTG…RLKGWLSLIA (170 aa)).

It belongs to the flavodoxin family. FMN is required as a cofactor.

Its function is as follows. Low-potential electron donor to a number of redox enzymes. NifF is the electron donor to nitrogenase. The chain is Flavodoxin (nifF) from Rhodobacter capsulatus (strain ATCC BAA-309 / NBRC 16581 / SB1003).